The chain runs to 430 residues: Adenylosuccinate synthetase (430 aa).

Residues 17–23 (GDEGKGK) and 45–47 (GHT) each bind GTP. Aspartate 18 acts as the Proton acceptor in catalysis. Positions 18 and 45 each coordinate Mg(2+). Residues 18–21 (DEGK), 43–46 (NAGH), threonine 139, arginine 153, asparagine 229, threonine 244, and arginine 308 each bind IMP. Histidine 46 functions as the Proton donor in the catalytic mechanism. Position 304–310 (304–310 (TVTGRRR)) interacts with substrate. GTP-binding positions include arginine 310, 336-338 (KLD), and 418-420 (GVG).

The protein belongs to the adenylosuccinate synthetase family. As to quaternary structure, homodimer. Mg(2+) is required as a cofactor.

It is found in the cytoplasm. It catalyses the reaction IMP + L-aspartate + GTP = N(6)-(1,2-dicarboxyethyl)-AMP + GDP + phosphate + 2 H(+). Its pathway is purine metabolism; AMP biosynthesis via de novo pathway; AMP from IMP: step 1/2. Plays an important role in the de novo pathway and in the salvage pathway of purine nucleotide biosynthesis. Catalyzes the first committed step in the biosynthesis of AMP from IMP. This Cryptococcus neoformans var. neoformans serotype D (strain JEC21 / ATCC MYA-565) (Filobasidiella neoformans) protein is Adenylosuccinate synthetase.